The chain runs to 697 residues: Semaphorin-2A (697 aa).

The N-terminal stretch at 1 to 20 is a signal peptide; the sequence is MAAKLWNLLLVAASVHLVGS. One can recognise a Sema domain in the interval 21–493; sequence VEQLHQDLIH…SDNIVRQIEL (473 aa). Asn63 and Asn66 each carry an N-linked (GlcNAc...) asparagine glycan. A disulfide bridge links Cys87 with Cys98. Residues Asn132, Asn198, and Asn283 are each glycosylated (N-linked (GlcNAc...) asparagine). Intrachain disulfides connect Cys260-Cys367 and Cys284-Cys326. N-linked (GlcNAc...) asparagine glycosylation is present at Asn369. 2 disulfides stabilise this stretch: Cys496/Cys512 and Cys506/Cys521. The Ig-like C2-type domain maps to 526 to 634; that stretch reads PGLLQDVTNT…LCSYNITVDA (109 aa). N-linked (GlcNAc...) asparagine glycans are attached at residues Asn534, Asn629, and Asn679. Cys618 and Cys654 are disulfide-bonded. Residues 673–685 show a composition bias toward polar residues; the sequence is QCSTKQNNSNQKT. Residues 673 to 697 form a disordered region; sequence QCSTKQNNSNQKTHPNDIFHSNPVA.

This sequence belongs to the semaphorin family. Expressed in a gradient in the developing limb bud epithelium during Ti pioneer axon outgrowth.

The protein resides in the secreted. In terms of biological role, acts as a chemorepulsive guidance molecule critical for axon fasciculation and for determining both the initial direction and subsequent pathfinding events of the Ti axon projection. This Schistocerca gregaria (Desert locust) protein is Semaphorin-2A (SEMA-2A).